The following is a 5085-amino-acid chain: MGNEASLEGEGLPEGLAAAAGAGGSGSALHPGIPAGMEADLSQLSEEERRQIAAVMSRAQGLPKGSVPPAAAESPSMHRKQELDSSQAPQQPGKPPDPGRPTQPGLSKSRTTDTFRSEQKLPGRSPSTISLKESKSRTDFKEEYKSSMMPGFFSDVNPLSAVSSVVNKFNPFDLISDSEASQEETTKKQKVVQKEQGKSEGMAKPPLQQPSPKPIPKQQGQVKEVIQQDSSPKSVSSQQAEKVKPQAPGTGKPSQQSPAQTPAQQASPGKPVAQQPGSAKATVQQPGPAKSPAQPAGTGKSPAQPPAKTPGQQAGLEKTSSSQQPGPKSLAQTPGHGKFPLGPVKSPAQQPGTAKHPAQQPGPQTAAKVPGPTKTPAQQSGPGKTPAQQPGPTKPSPQQPIPAKPQPQQPVATKTQPQQSAPAKPQPQQPAPAKPQPQQPTPAKPQPQPPTPAKPQPQPPTATKPQPQPPTATKPHHQQPGLAKPSAQQPTKSISQTVTGRPLQPPPTSAAQTPAQGLSKTICPLCNTTELLLHIPEKANFNTCTECQSTVCSLCGFNPNPHLTEIKEWLCLNCQMQRALGGDLAAAIPSSPQPTPKAATAPTATASKSPVPSQQASPKKEPPSKQDSPKALESKKPPEPKKPPEPKKPPEPKKPPPLVKQPTLHGPTPATAPQLPVAEALPEPAPPKEPSGPLPEQAKAPVGDVEPKQPKMTETRADIQSSSTTKPDILSSQVQSQAQVKTASPLKTDSAKPSQSFPPTGEKTTPLDSKAMPRPASDSKIISQPGPGSESKDPKHIDPIQKKDEPKKAQPKGSPKPETKPVPKGSPTPSGTRPTAGQAAPPSQQPPKPQEQSRRFSLNLGGITDAPKSQPTTPQETVTGKLFGFGASIFSQASNLISTAGQQGPHPQTGPAAPSKQAPTPSQSPAAQGPAKSTGQLPPAPAKATAVKKEAKAAAAENLESKPEQAPTAKKTEKDKKPPPAKVGKPPPSEPEKAVPAHKPDKTTKPKPACPLCRTELNLGSQEPPNFNTCTECKNQVCNLCGFNPTPHLTEIQEWLCLNCQTQRAISGQLGDMGKMPPAPSGPKASPMPAPAEPSSQKTPTGTQVKGKKKEAEGKTEAEKPVPEKETASIEKTPPMVTTDQKLEESEGKKSKVSALPEKKPSEEEKAISADKKERKPPAEEKPPLEEKKPIPVDKKLPPEAKPLSSEGEEKHEILKAHVQIPEEEPTGKVAAKAGEEEQQPDSRPEALPGATPLTLPKAGEKERAVAQPQAEGSSKDGQGERSKEKTEKEEDKSDTSSSQQPKSPQGLSDTGYSSDGISGSLGEIPSLIPSDEKDLLKGLKKDSFSQESSPSSPSDLAKLESTVLSILEAQASTLVGEKAEKKTQPQKISPEKPQDQQKTQTASETLDITISEEEIKESQEKKVSPKKDSEQGFPSRKEHKEKPELVDDLSPRRASYDSVEDSSESENSPVVRRKRRTSIGSSSSDEYKQEDSQGSGEEEDFIRKQIIEMSADEDASGSEDEEFIRSQLKEISGVGESQKREEAKGKGKGVAGKHRRLTRKSSTSFDDDAGRRHSWHDEDDETFDESPELKFRETKSQESEELVVAGGGGLRRFKTIELNSTIADKYSSESSQKKTILYFDEEPELEMESLTDSPEDRSRGEGSSSLHASSFTPGTSPTSVSSLDEDSDSSPSHKKGESKQQRKARHRSHGPLLPTIEDSSEEEELREEEELLKEQEKQRELEQQQRKSSSKKSKKDKDELRAQRRRERPKTPPSNLSPIEDASPTEELRQAAEMEELHRSSCSEYSPSIESDPEGFEISPEKIIEVQKVYKLPAAVSLYSPTDEQSVMQKEGVQKALKSAEEMYEEMMQKPHKYKAFPAANERDEVFEKEPLYGGMLIEDYIYESLVEDTYNGSVDGSLLTRQEEQNGFMQQRGREQKVRLQEQIYDDPMQKISDLQKEFYELESLHSVVPQEDIVSSSYIIPESHEIVDLGSMVMSTSEEKKLLDADSAYEELMRRQQVQVTDGSSPVQTTIGDDMAESTLDFDRVQDASLTSSILSGASLTDSTSSATLSIPDVKITQQFSAEELEDEYVTDYTREIQDIIAHESLILTYSEPSESATSVPPSDTPSLTSSISSVCTTDSSSPVTTLDSLTTVYTEPADVMTKFKDSEEISSTYFPGSIIDYPEDISVSLDRTIMPESRTNEDRIVLSFSGMAPSVVESVGTKPERPQADTISTDLPISEKDLIKGKKETGDGIILEVLDAYKDKREESEAELTKISLPEPGLAQAPSSVTAPQIKEQHVSPHSVSGKISGQEKPTYRLPSGSLPVSTHPSKSRPFFRSSSLDISAQPPPPPPPPPPSPSTSSPPPTPPLPPATSPKPPTYPKKKLAVAATVTSTTIVTTHVDALTMVEAAAARRSNGLPATKMCAIAPPPVPPKPSQIPTGLVFTHRPEAIKPPIAPKPAVPQIPVTTQKPTDTCPKPTGLSLTSTMSLNLVTSADYNVPSPTSPLSPHSNKSSPRYSKSLMDTYVVITLPSEPGTPTDSSAAQAITSWPLGSPPKDLVSLETVFSVVPPMTSTEIPSASQPTLYTSGALGTFSVTPAVTASLFQTVPTSLTQFLPAEASKPEVSAVSSAVPSVAPRSVSIPIPPEPLALDRHQYKENGKLPLIGDAIDLRTIPKSEVKVTEKCMDLSASAMDVKRQTTANEVYRRQISAVQPSIINLSAASSLGTPVTMDSKTVAVVTCTDTTIYTTGTESQVGIEHAVTSPLQLTTSKHTELPYRKPSSQAFPTIRDEAPINLSLGPSAQAVTLAVTKPVTVPPVGVTNGWTDSTLSQGVADGEVVDLSTSKSHRTVVTMDESTSNVVTKIIEDDEKPVDLTAGRRAVCCDMVYTLPFGRSCTAQQPATTLPEDRFGYRDDHYQYDRSGPYGYRGIGGMKPSMSDTNLPEAGHFFYKSKNAFDYSGGTGAAVDLTSGRVSTGEVMDYSSKTTGPYPETRQVISGVGISTPQYSTARLTPPPGPQYGVGSVLRSSNGVVYSSVATPIPSTFAITTQPGSIFSTTVRDLSGIPTTDAMTSLSALHQSQPMPRSYFITTGASETDIAVTGIDINASLQTITMETLPAETMDSVPTLTTASEVFSEVVGEESTLLIVPDEDKQQQQLDLERELLELEKIKQQRFAEELEWERQEIQRFREQEKIMVQKKLEELQSMKQHLLYQQEEERQAQFMMRQETLAQQQLQLEQIQQLQQQLHQQLEEQKLRQIYQYNYDPSGTSSPQTTTEQAILEGQYAATEGSQFWATEDATTTASTVVAIEIPQSQGWYTVQSDGVTQYIAPPGILSTVSEIPLTDVVVKEEKQPKKRSSGAKVRGQYDEMGESVADDPRNLKKIVDSGVQTDDEETADRSYASRRRRTKKSVDTSVQTDDEDQDEWDMPSRSRRKARTGKYGDSTAEGDKTKPLSKVSSVAVQTVAEISVQTEPVGTIRTPSIRARVDAKVEIIKHISAPEKTYKGGSLGCQTETDSDTQSPPYLGATSPPKDKKRPTPLEIGYSSSHLRADPTVQLAPSPPKSPKVLYSPISPLSPGNALEPAFVPYEKPLPDDISPQKVLHPDMAKVPPASPKTAKMMQRSMSDPKPLSPTADESSRAPFQYSEGFTTKGSQTMTASGTQKKVKRTLPNPPPEEVSTGTQSTYSTMGTASRRRMCRTNTMARAKILQDIDRELDLVERESAKLRKKQAELDEEEKEIDAKLRYLEMGINRRKEALLKEREKRERAYLQGVAEDRDYMSDSEVSSTRPSRVESQHGVERPRTAPQTEFSQFIPPQTQTEAQLVPPTSPYTQYQYSSPALPTQAPTPYTQQSHFQQQTLYHQQVSPYQTQPTFQAVATMSFTPQAQPTPTPQPSYQLPSQMMVIQQKPRQTTLYLEPKITSNYEVIRNQPLMIAPVSTDNTYAVSHLGSKYNSLDLRIGLEERSSMAGSPISSISADSFYADIDHHTSRNYVLIDDIGDITKGTAALSTVFSLHEKDLSKTDRLLRTTETRRSQEVTDFLAPLQTSSRLHSYVKADEDPMEDPYELKLLKHQIKQEFRRGTESLDHLAGLSHYYHADTSYRHFPKSEKYSISRLTLEKQAAKQLPAAILYQKQSKHKKSLIDPKMSKFSPIQESRDLEPDYPTYMSSGTSSIGGISSRARLLQDDITFGLRKNITDQQKFMGSSLGSGLGTLGNTIRSALQDEADKPYSSGSRSRPSSRPSSVYGLDLSIKRDSSSSSLRLKAQEAEALDVSFGHSSSSARTKPTSLPISQSRGRIPIVAQSSEEESPLSPVGQPMGMARAAAGPLPPISADTRDQFGSSHSLPEVQQHMREESRTRGYDRDIAFIMDDFQHAMSDSEAYHLRREETDWFDKPRESRLENGHGLDRKLPERLVHSRPLSQHQEQILQMNGKTIHYIFPHARVKITRDFKDHTGSGNGLGIRIVGGKEIPGHSGEIGAYIAKILPGESAEHTGPLMEGMQVLEWNGVPLTSKTYEEVQSIINQQSGEAEICVRLDLNMLSDSENPQHLELHEPPKVDKAKSPGVDPKQLAAELQKVSLQQSPLVMSSVVEKGSHAHSGPTSAGSSSVPSPGQPGSPSVSKKKHSSTKPTDGPKAASHPITGEIQLQINYDLGNLIIHILQARNLVPRDNNGYSDPFVKVYLLPGRGQVMVVQNASAEYKRRTKYVQKSLNPEWNQTVIYKSISMEQLMKKTLEVTVWDYDRFSSNDFLGEVLIDLSSTSHLDNTPRWYPLKEQTESIDHGKSHSSQNSQQSPKPSVIKSRSHGIFPDPSKDMQVPTIEKSHSSPGSSKSSSEGHLRSHGPSRSQSKTSVAQTHLEDAGVAIAAAEAAVQQLRIQPTKPTNHRPAESSVSTGSSGSSVGSGYSVDSEGSSCVAGEPNLLPIPRIGKMGQNGQDPVKQPGMGATDTEGKTQVMGEIKLALKKEMKTDGEQLIVEILQCRNITYKFKSPDHLPDLYVKLYVINISTQKKVIKKKTRVCRHDREPSFNETFRFSLSPAGHSLQILLFSNGGKFMKKTLIGEACIWLDKVDLRKRIVNWHKLLVSPTQTH.

Positions 1–20 are enriched in low complexity; the sequence is MGNEASLEGEGLPEGLAAAA. 2 disordered regions span residues 1 to 142 and 173 to 516; these read MGNE…DFKE and DLIS…TPAQ. Residues 92-101 are compositionally biased toward pro residues; that stretch reads PGKPPDPGRP. Basic and acidic residues-rich tracts occupy residues 110 to 121, 132 to 142, and 184 to 198; these read RTTDTFRSEQKL, KESKSRTDFKE, and ETTK…EQGK. Phosphoserine is present on residues serine 211 and serine 231. The segment covering 227–240 has biased composition (polar residues); that stretch reads QQDSSPKSVSSQQA. Residues 253–268 show a composition bias toward low complexity; that stretch reads PSQQSPAQTPAQQASP. Polar residues-rich tracts occupy residues 275–285, 318–332, and 375–391; these read QPGSAKATVQQ, KTSS…SLAQ, and TPAQ…QQPG. A 12 X 10 AA tandem approximate repeats of P-A-K-P-Q-P-Q-Q-P-X region spans residues 372–491; it reads PTKTPAQQSG…LAKPSAQQPT (120 aa). Over residues 392 to 408 the composition is skewed to pro residues; it reads PTKPSPQQPIPAKPQPQ. Over residues 409–423 the composition is skewed to low complexity; it reads QPVATKTQPQQSAPA. Over residues 424 to 472 the composition is skewed to pro residues; the sequence is KPQPQQPAPAKPQPQQPTPAKPQPQPPTPAKPQPQPPTATKPQPQPPTA. Polar residues predominate over residues 486–499; sequence SAQQPTKSISQTVT. The segment at 523–547 adopts a C4-type zinc-finger fold; sequence CPLCNTTELLLHIPEKANFNTCTEC. Disordered regions lie at residues 586–880, 896–1012, 1069–1357, 1373–1604, and 1622–1815; these read AAIP…TVTG, LIST…ACPL, QLGD…PSDL, STLV…EELV, and TIAD…SDPE. Low complexity predominate over residues 596–613; the sequence is PKAATAPTATASKSPVPS. The segment covering 618-654 has biased composition (basic and acidic residues); sequence PKKEPPSKQDSPKALESKKPPEPKKPPEPKKPPEPKK. Residues 672–682 are compositionally biased toward low complexity; the sequence is APQLPVAEALP. Positions 683–693 are enriched in pro residues; that stretch reads EPAPPKEPSGP. The segment covering 705–717 has biased composition (basic and acidic residues); sequence VEPKQPKMTETRA. Residues 718-767 show a composition bias toward polar residues; sequence DIQSSSTTKPDILSSQVQSQAQVKTASPLKTDSAKPSQSFPPTGEKTTPL. Residues 790 to 808 show a composition bias toward basic and acidic residues; the sequence is ESKDPKHIDPIQKKDEPKK. 2 positions are modified to phosphoserine: serine 857 and serine 869. Composition is skewed to polar residues over residues 867–878, 896–906, and 917–936; these read PKSQPTTPQETV, LISTAGQQGPH, and QAPT…STGQ. Position 873 is a phosphothreonine (threonine 873). Basic and acidic residues predominate over residues 990–1004; that stretch reads EPEKAVPAHKPDKTT. Residues 1010-1033 form a C4-type zinc finger; it reads CPLCRTELNLGSQEPPNFNTCTEC. Pro residues predominate over residues 1077–1092; the sequence is PPAPSGPKASPMPAPA. The span at 1110–1129 shows a compositional bias: basic and acidic residues; it reads KEAEGKTEAEKPVPEKETAS. Threonine 1133 is modified (phosphothreonine). Basic and acidic residues-rich tracts occupy residues 1141 to 1150, 1157 to 1199, and 1274 to 1295; these read QKLEESEGKK, PEKK…KLPP, and SSKD…DKSD. Residues 1300 to 1318 show a composition bias toward polar residues; that stretch reads QQPKSPQGLSDTGYSSDGI. A phosphoserine mark is found at serine 1304, serine 1314, serine 1315, serine 1344, serine 1346, serine 1349, serine 1350, and serine 1353. Residues 1331-1345 are compositionally biased toward basic and acidic residues; sequence SDEKDLLKGLKKDSF. Low complexity predominate over residues 1346-1355; it reads SQESSPSSPS. The segment covering 1378–1396 has biased composition (basic and acidic residues); the sequence is EKAEKKTQPQKISPEKPQD. A compositionally biased stretch (polar residues) spans 1397–1407; it reads QQKTQTASETL. The span at 1417–1456 shows a compositional bias: basic and acidic residues; that stretch reads KESQEKKVSPKKDSEQGFPSRKEHKEKPELVDDLSPRRAS. Residues serine 1451, serine 1463, serine 1464, serine 1466, serine 1469, serine 1493, serine 1496, serine 1517, and serine 1519 each carry the phosphoserine modification. A compositionally biased stretch (acidic residues) spans 1511 to 1523; it reads SADEDASGSEDEE. Threonine 1564 bears the Phosphothreonine mark. 3 positions are modified to phosphoserine: serine 1565, serine 1575, and serine 1587. Positions 1578 to 1587 are enriched in acidic residues; sequence DEDDETFDES. The span at 1588–1599 shows a compositional bias: basic and acidic residues; the sequence is PELKFRETKSQE. A compositionally biased stretch (polar residues) spans 1622 to 1635; it reads TIADKYSSESSQKK. Residues 1640-1650 show a composition bias toward acidic residues; it reads FDEEPELEMES. Serine 1650 carries the post-translational modification Phosphoserine. At threonine 1652 the chain carries Phosphothreonine. Phosphoserine occurs at positions 1654 and 1659. The span at 1662 to 1679 shows a compositional bias: polar residues; that stretch reads EGSSSLHASSFTPGTSPT. Positions 1719 to 1732 are enriched in acidic residues; sequence DSSEEEELREEEEL. Phosphoserine occurs at positions 1720 and 1721. The segment covering 1733–1746 has biased composition (basic and acidic residues); sequence LKEQEKQRELEQQQ. Threonine 1772 carries the phosphothreonine modification. Serine 1778 carries the post-translational modification Phosphoserine. A compositionally biased stretch (basic and acidic residues) spans 1787-1802; the sequence is EELRQAAEMEELHRSS. Phosphoserine is present on residues serine 1807, serine 1812, serine 1820, and serine 1841. Disordered regions lie at residues 2116–2139, 2275–2385, and 2456–2486; these read PSES…SSVC, ELTK…PTYP, and KPPI…TGLS. Residues 2121-2139 show a composition bias toward low complexity; that stretch reads TSVPPSDTPSLTSSISSVC. Residues 2350-2384 show a composition bias toward pro residues; that stretch reads QPPPPPPPPPPSPSTSSPPPTPPLPPATSPKPPTY. A Phosphoserine modification is found at serine 2511. O-linked (GlcNAc) threonine glycosylation is present at threonine 2702. A glycan (O-linked (GlcNAc) serine) is linked at serine 2976. Position 3014 is a phosphothreonine (threonine 3014). 2 disordered regions span residues 3350 to 3457 and 3503 to 3572; these read KEEK…PLSK and KTYK…LYSP. Serine 3374 is subject to Phosphoserine. Residues 3377-3386 are compositionally biased toward basic and acidic residues; the sequence is DDPRNLKKIV. Serine 3388 is subject to Phosphoserine. Phosphothreonine occurs at positions 3392 and 3419. Acidic residues predominate over residues 3419–3428; that stretch reads TDDEDQDEWD. Residues 3511–3523 are compositionally biased toward polar residues; the sequence is GCQTETDSDTQSP. Phosphoserine occurs at positions 3522, 3530, 3561, 3565, 3571, 3574, 3577, 3598, 3624, 3626, and 3632. Disordered stretches follow at residues 3602 to 3695 and 3774 to 3816; these read VLHP…ASRR and AEDR…FIPP. Composition is skewed to polar residues over residues 3647–3663 and 3679–3691; these read EGFT…SGTQ and STGT…TMGT. A Phosphoserine modification is found at serine 3781. Positions 3791-3803 are enriched in basic and acidic residues; that stretch reads SRVESQHGVERPR. A compositionally biased stretch (polar residues) spans 3805–3816; it reads APQTEFSQFIPP. 2 positions are modified to phosphoserine: serine 4034 and serine 4150. Disordered regions lie at residues 4225-4248 and 4272-4291; these read ADKP…YGLD and VSFG…LPIS. A compositionally biased stretch (low complexity) spans 4228 to 4248; it reads PYSSGSRSRPSSRPSSVYGLD. Residues 4275-4291 are compositionally biased toward polar residues; the sequence is GHSSSSARTKPTSLPIS. A phosphoserine mark is found at serine 4304, serine 4308, serine 4311, serine 4340, and serine 4376. Residues 4335–4357 are disordered; the sequence is RDQFGSSHSLPEVQQHMREESRT. Residues 4442–4536 form the PDZ domain; that stretch reads RVKITRDFKD…EAEICVRLDL (95 aa). Residues 4589 to 4638 are disordered; the sequence is VEKGSHAHSGPTSAGSSSVPSPGQPGSPSVSKKKHSSTKPTDGPKAASHP. Over residues 4595-4618 the composition is skewed to low complexity; that stretch reads AHSGPTSAGSSSVPSPGQPGSPSV. Serine 4609 carries the phosphoserine modification. Residues 4639-4768 enclose the C2 1 domain; it reads ITGEIQLQIN…SHLDNTPRWY (130 aa). Positions 4668 and 4674 each coordinate Ca(2+). Serine 4723 carries the post-translational modification Phosphoserine. 4 residues coordinate Ca(2+): aspartate 4738, aspartate 4740, serine 4743, and aspartate 4746. Disordered regions lie at residues 4775–4851 and 4874–4908; these read ESID…SVAQ and QPTK…SEGS. Low complexity-rich tracts occupy residues 4783–4795 and 4822–4832; these read HSSQ…PKPS and SSPGSSKSSSE. The span at 4840-4851 shows a compositional bias: polar residues; it reads PSRSQSKTSVAQ. Residues 4886–4908 are compositionally biased toward low complexity; sequence SSVSTGSSGSSVGSGYSVDSEGS. A C2 2 domain is found at 4950–5075; sequence VMGEIKLALK…DLRKRIVNWH (126 aa).

As to quaternary structure, interacts with BSN, ERC2/CAST1, RIMS1 and UNC13A. Interacts (via C-terminus) with TRIO (via N-terminus). Interacts with CTBP1. Interacts with SIAH1; this interaction negatively regulates SIAH1 E3 ligase activity. Directly interacts with GIT1 and GIT2. Ca(2+) is required as a cofactor. In terms of tissue distribution, expressed in brain (at protein level).

The protein resides in the presynaptic active zone. Scaffold protein of the presynaptic cytomatrix at the active zone (CAZ) which is the place in the synapse where neurotransmitter is released. After synthesis, participates in the formation of Golgi-derived membranous organelles termed Piccolo-Bassoon transport vesicles (PTVs) that are transported along axons to sites of nascent synaptic contacts. At the presynaptic active zone, regulates the spatial organization of synaptic vesicle cluster, the protein complexes that execute membrane fusion and compensatory endocytosis. Organizes as well the readily releasable pool of synaptic vesicles and safeguards a fraction of them to be not immediately available for action potential-induced release. Also functions in processes other than assembly such as the regulation of specific presynaptic protein ubiquitination by interacting with SIAH1 or the regulation of presynaptic autophagy. Also mediates synapse to nucleus communication leading to reconfiguration of gene expression by associating with the transcriptional corepressor CTBP1 and by subsequently reducing the size of its pool available for nuclear import. The chain is Protein piccolo (Pclo) from Rattus norvegicus (Rat).